The chain runs to 173 residues: Dual-action ribosomal maturation protein DarP (173 aa).

The protein belongs to the DarP family.

The protein localises to the cytoplasm. In terms of biological role, member of a network of 50S ribosomal subunit biogenesis factors which assembles along the 30S-50S interface, preventing incorrect 23S rRNA structures from forming. Promotes peptidyl transferase center (PTC) maturation. The sequence is that of Dual-action ribosomal maturation protein DarP from Pseudomonas fluorescens (strain ATCC BAA-477 / NRRL B-23932 / Pf-5).